We begin with the raw amino-acid sequence, 265 residues long: MSRLTLLVLLVIAAVIQKVHGQGRENEKKNEHEPGNQDGGNQNEKTERNLREPNRQTRRFNTRNDNRNRNIMQKRAMLLWQRRMNQRSNQNNFGNNRSIPPTNTFNRNRSRTKSNKSEVEKENGSNKASKGKMQSGDGGGNGSEKEGPERRKVQHRIAKRFQKRHPSNSPKPKPARKTTNQQYRRHFMNNYNNKYWNWRRNMLNRRRTSPQHYQNQQARWRYYRYGPYTWYRYKNKWRLVRYNNMYRRNIKTNQSKKSNQNNQGD.

The signal sequence occupies residues 1–21 (MSRLTLLVLLVIAAVIQKVHG). 2 disordered regions span residues 20 to 71 (HGQG…NRNI) and 88 to 183 (SNQN…NQQY). Basic and acidic residues-rich tracts occupy residues 22 to 35 (QGRE…HEPG) and 44 to 55 (EKTERNLREPNR). A compositionally biased stretch (low complexity) spans 88–98 (SNQNNFGNNRS). Residues 115–124 (NKSEVEKENG) show a composition bias toward basic and acidic residues. The span at 152–166 (KVQHRIAKRFQKRHP) shows a compositional bias: basic residues.

In terms of tissue distribution, nacreous layer of shell (at protein level). Expressed primarily in the mantle with highest level in the mantle pallium and lower level in the mantle edge.

Its subcellular location is the secreted. This chain is Asparagine-rich protein, found in Pinctada maxima (Silver-lipped pearl oyster).